The following is a 303-amino-acid chain: MPAISMKELLEAGVHFGHQTKRWNPKMKEYIFGERNGIYIIDLQKTLKMFKDAARFVGEMAAQGKNVLFVGTKRQAQEAIAEEANRCQMYYVNQRWLGGLLTNMLTVQKSIKRLKELEAMASVEGGYAGRPKKEVIRLERERKHLDQNLSGIKDMPGLPDVLFVIDSNKEGIAVKEARRLGIPVVAIVDTNCDPDEVDWVIPGNDDALRAIRLFASKIADAVVEGRALATEQDFTADKIISDETPAEEGMMEYTEYVDPKYAEKIMAESLSMAEEPAPPSQRKGPASETAEPVAEPAVTESGS.

Positions alanine 267 to serine 303 are disordered.

It belongs to the universal ribosomal protein uS2 family.

This chain is Small ribosomal subunit protein uS2, found in Solibacter usitatus (strain Ellin6076).